We begin with the raw amino-acid sequence, 339 residues long: uncharacterized protein (339 aa).

Positions 1 to 24 (IQPARRHTKNTNMAKHTTKGTGHS) are disordered. Residues 10–21 (NTNMAKHTTKGT) show a composition bias toward polar residues.

Its subcellular location is the mitochondrion. This is an uncharacterized protein from Zea mays (Maize).